The sequence spans 82 residues: Turripeptide Lol6.1 (82 aa).

An N-terminal signal peptide occupies residues 1–23 (MRFHWIPTLTVLLVLSMSFGTEA). A propeptide spanning residues 24–48 (IPXXXXXXXXXXXXXXXXXXXXXXX) is cleaved from the precursor. 3 cysteine pairs are disulfide-bonded: C54-C66, C58-C71, and C65-C77.

As to expression, expressed by the venom duct.

Its subcellular location is the secreted. In terms of biological role, acts as a neurotoxin by inhibiting an ion channel. The protein is Turripeptide Lol6.1 of Iotyrris olangoensis (Sea snail).